Here is an 89-residue protein sequence, read N- to C-terminus: Large ribosomal subunit protein eL43 (89 aa).

Positions 38, 41, 56, and 59 each coordinate Zn(2+). The C4-type zinc-finger motif lies at 38-59 (CPVCHKRAVKRVGTGIWRCTKC).

The protein belongs to the eukaryotic ribosomal protein eL43 family. Putative zinc-binding subfamily. As to quaternary structure, part of the 50S ribosomal subunit. Requires Zn(2+) as cofactor.

Its function is as follows. Binds to the 23S rRNA. The sequence is that of Large ribosomal subunit protein eL43 from Methanopyrus kandleri (strain AV19 / DSM 6324 / JCM 9639 / NBRC 100938).